The sequence spans 125 residues: Large ribosomal subunit protein bL17 (125 aa).

This sequence belongs to the bacterial ribosomal protein bL17 family. In terms of assembly, part of the 50S ribosomal subunit. Contacts protein L32.

In Syntrophus aciditrophicus (strain SB), this protein is Large ribosomal subunit protein bL17.